We begin with the raw amino-acid sequence, 65 residues long: UPF0434 protein BRADO0313 (65 aa).

Belongs to the UPF0434 family.

This is UPF0434 protein BRADO0313 from Bradyrhizobium sp. (strain ORS 278).